The sequence spans 140 residues: ATP synthase epsilon chain (140 aa).

Belongs to the ATPase epsilon chain family. In terms of assembly, F-type ATPases have 2 components, CF(1) - the catalytic core - and CF(0) - the membrane proton channel. CF(1) has five subunits: alpha(3), beta(3), gamma(1), delta(1), epsilon(1). CF(0) has three main subunits: a, b and c.

The protein localises to the cell inner membrane. Its function is as follows. Produces ATP from ADP in the presence of a proton gradient across the membrane. In Xylella fastidiosa (strain Temecula1 / ATCC 700964), this protein is ATP synthase epsilon chain.